The primary structure comprises 355 residues: Poly(3-hydroxyalkanoate) polymerase subunit PhaC (355 aa).

Positions 68–333 constitute an AB hydrolase-1 domain; it reads PLLIVYALVN…LAFPGGHIGI (266 aa). Cys148 is an active-site residue.

Belongs to the PHA/PHB synthase family. Type III PhaC subfamily. Forms a heterodimer with PhaE, which may multimerize in the presence of 3-hydroxybutyryl-CoA.

The protein localises to the cytoplasm. The enzyme catalyses (3R)-3-hydroxybutanoyl-CoA + [(3R)-hydroxybutanoate](n) = [(3R)-hydroxybutanoate](n+1) + CoA. It participates in biopolymer metabolism; poly-(R)-3-hydroxybutanoate biosynthesis. Its function is as follows. Polymerizes D(-)-3-hydroxybutyryl-CoA to create PHB which consists of thousands of hydroxybutyrate molecules linked end to end. PHB serves as an intracellular energy reserve material when cells grow under conditions of nutrient limitation. This is Poly(3-hydroxyalkanoate) polymerase subunit PhaC from Thiocystis violacea.